Here is a 175-residue protein sequence, read N- to C-terminus: Transcription factor E (175 aa).

Residues 3-88 enclose the HTH TFE/IIEalpha-type domain; the sequence is DNPLIQQVLF…TWKPSLEKLP (86 aa).

It belongs to the TFE family. In terms of assembly, monomer. Interaction with RNA polymerase subunits RpoF and RpoE is necessary for Tfe stimulatory transcription activity. Able to interact with Tbp and RNA polymerase in the absence of DNA promoter. Interacts both with the preinitiation and elongation complexes.

Its function is as follows. Transcription factor that plays a role in the activation of archaeal genes transcribed by RNA polymerase. Facilitates transcription initiation by enhancing TATA-box recognition by TATA-box-binding protein (Tbp), and transcription factor B (Tfb) and RNA polymerase recruitment. Not absolutely required for transcription in vitro, but particularly important in cases where Tbp or Tfb function is not optimal. It dynamically alters the nucleic acid-binding properties of RNA polymerases by stabilizing the initiation complex and destabilizing elongation complexes. Seems to translocate with the RNA polymerase following initiation and acts by binding to the non template strand of the transcription bubble in elongation complexes. This Methanococcus vannielii (strain ATCC 35089 / DSM 1224 / JCM 13029 / OCM 148 / SB) protein is Transcription factor E.